A 1483-amino-acid chain; its full sequence is Guanylyl cyclase, membrane (1483 aa).

6 helical membrane-spanning segments follow: residues 50–70 (ISII…YISP), 143–163 (FILR…TFTA), 168–188 (LWKL…LIFE), 198–218 (MVLL…PSML), 219–239 (ASGG…QIAG), and 242–262 (MVLL…ISRF). The interval 323 to 376 (KKDEESNLTGKKQSKVVVSPPPPPTAAAPQQQDNEISTPQNSRKIVDPQSPSSL) is disordered. The segment covering 355–376 (DNEISTPQNSRKIVDPQSPSSL) has biased composition (polar residues). Residues 395-517 (TVLFCEIVNF…DTINTSSRMA (123 aa)) form the Guanylate cyclase 1 domain. Disordered stretches follow at residues 598–619 (NNTI…THPN) and 672–838 (LTSP…GDDF). The span at 610-619 (GSATGPTHPN) shows a compositional bias: polar residues. 3 stretches are compositionally biased toward low complexity: residues 672 to 684 (LTSP…PQQS), 693 to 712 (SPRL…SSST), and 720 to 765 (NNNN…NNNN). A compositionally biased stretch (polar residues) spans 772 to 786 (SPISQNTTPTGSLSL). The next 6 membrane-spanning stretches (helical) occupy residues 907-927 (ILAS…VDYF), 982-1002 (IITG…YVVS), 1016-1036 (VVMV…SVPP), 1040-1060 (IPLD…CYNF), 1061-1081 (SGIK…FIEI), and 1094-1114 (IYLS…ITSY). The Guanylate cyclase 2 domain occupies 1168–1296 (TIFLSDIVGF…ESVQITQQME (129 aa)). 3 residues coordinate Mg(2+): D1173, I1174, and D1217. Disordered stretches follow at residues 1348 to 1369 (QPEV…SLQY) and 1393 to 1483 (NQND…SESS). Residues 1354-1369 (RSVSVSKSNFGGSLQY) show a composition bias toward polar residues. Low complexity predominate over residues 1405–1416 (NENGNESSSSNI). The segment covering 1432–1444 (NEDDESSYEDDQE) has biased composition (acidic residues). The segment covering 1446 to 1465 (NQYLNNSENNKNNNNNSNQI) has biased composition (low complexity).

The protein belongs to the adenylyl cyclase class-4/guanylyl cyclase family. In terms of assembly, homodimer. It depends on Mg(2+) as a cofactor.

The protein resides in the membrane. The catalysed reaction is GTP = 3',5'-cyclic GMP + diphosphate. With respect to regulation, activated by guanosine 5'-3-O-(thio)triphosphate (GTPgammaS). Inhibited by calcium. In terms of biological role, synthesizes cyclic GMP (cGMP) from GTP, after activation by heterotrimeric or monomeric G proteins. Involved in chemotaxis. This is Guanylyl cyclase, membrane (gca) from Dictyostelium discoideum (Social amoeba).